The sequence spans 503 residues: Basic immunoglobulin-like variable motif-containing protein (503 aa).

Residues methionine 1–glutamate 26 are compositionally biased toward basic and acidic residues. Disordered stretches follow at residues methionine 1–valine 33, threonine 152–glutamine 184, and glutamate 438–phenylalanine 469. Positions serine 155 to serine 172 are enriched in basic residues. Positions aspartate 173–glutamine 184 are enriched in basic and acidic residues.

The protein belongs to the BIVM family. In terms of tissue distribution, widely expressed. Expressed at higher level in spleen, ovary, small intestine, colon, peripheral blood leukocytes and liver. Also expressed in testis, ovary, aorta, appendix, trachea, pituitary gland, bladder, uterus, spinal cord, salivary gland, stomach, mammary gland and bone marrow. Weakly or not expressed in fetal spleen, adult thymus and certain cancer cell lines.

Its subcellular location is the cytoplasm. It is found in the nucleus. This chain is Basic immunoglobulin-like variable motif-containing protein (BIVM), found in Homo sapiens (Human).